The primary structure comprises 240 residues: Ribonuclease 3 (240 aa).

The 133-residue stretch at 9–141 (VEELQKRLGV…LLAALYLDQG (133 aa)) folds into the RNase III domain. Residue glutamate 54 coordinates Mg(2+). The active site involves aspartate 58. 2 residues coordinate Mg(2+): aspartate 127 and glutamate 130. Glutamate 130 is a catalytic residue. Positions 168–237 (DYKTALQEIV…ARKAYEKLVA (70 aa)) constitute a DRBM domain.

This sequence belongs to the ribonuclease III family. Homodimer. Requires Mg(2+) as cofactor.

It localises to the cytoplasm. It catalyses the reaction Endonucleolytic cleavage to 5'-phosphomonoester.. In terms of biological role, digests double-stranded RNA. Involved in the processing of primary rRNA transcript to yield the immediate precursors to the large and small rRNAs (23S and 16S). Processes some mRNAs, and tRNAs when they are encoded in the rRNA operon. Processes pre-crRNA and tracrRNA of type II CRISPR loci if present in the organism. This chain is Ribonuclease 3, found in Thermotoga neapolitana (strain ATCC 49049 / DSM 4359 / NBRC 107923 / NS-E).